Consider the following 215-residue polypeptide: E3 ubiquitin-protein ligase znrf1 (215 aa).

Disordered stretches follow at residues 1–39 (MGGK…PGGT) and 66–96 (YTPR…ETGG). Residue glycine 2 is the site of N-myristoyl glycine attachment. The segment at 172–213 (CVICLEELQQGDTIARLPCLCIYHKSCIDSWFEINRSCPEHP) adopts an RING-type; atypical zinc-finger fold.

Its subcellular location is the endosome. It is found in the lysosome. It localises to the membrane. It carries out the reaction S-ubiquitinyl-[E2 ubiquitin-conjugating enzyme]-L-cysteine + [acceptor protein]-L-lysine = [E2 ubiquitin-conjugating enzyme]-L-cysteine + N(6)-ubiquitinyl-[acceptor protein]-L-lysine.. It participates in protein modification; protein ubiquitination. Functionally, E3 ubiquitin-protein ligase that plays a role in neuron cells differentiation. Plays a role in the establishment and maintenance of neuronal transmission and plasticity. The sequence is that of E3 ubiquitin-protein ligase znrf1 (znrf1) from Danio rerio (Zebrafish).